The sequence spans 355 residues: Lipoyl synthase (355 aa).

Residues 7 to 55 (HLSKFAYREEFAGNTEVLATAAYKEDCADASTGLTPKLPLEVEFGKMSK) form the RPE1 insert domain. 7 residues coordinate [4Fe-4S] cluster: Cys-86, Cys-91, Cys-97, Cys-112, Cys-116, Cys-119, and Ser-325. The 217-residue stretch at 98 to 314 (WSKKHATVMI…ERVARTKGFL (217 aa)) folds into the Radical SAM core domain.

Belongs to the radical SAM superfamily. Lipoyl synthase family. Requires [4Fe-4S] cluster as cofactor.

Its subcellular location is the cytoplasm. It catalyses the reaction [[Fe-S] cluster scaffold protein carrying a second [4Fe-4S](2+) cluster] + N(6)-octanoyl-L-lysyl-[protein] + 2 oxidized [2Fe-2S]-[ferredoxin] + 2 S-adenosyl-L-methionine + 4 H(+) = [[Fe-S] cluster scaffold protein] + N(6)-[(R)-dihydrolipoyl]-L-lysyl-[protein] + 4 Fe(3+) + 2 hydrogen sulfide + 2 5'-deoxyadenosine + 2 L-methionine + 2 reduced [2Fe-2S]-[ferredoxin]. The protein operates within protein modification; protein lipoylation via endogenous pathway; protein N(6)-(lipoyl)lysine from octanoyl-[acyl-carrier-protein]: step 2/2. Catalyzes the radical-mediated insertion of two sulfur atoms into the C-6 and C-8 positions of the octanoyl moiety bound to the lipoyl domains of lipoate-dependent enzymes, thereby converting the octanoylated domains into lipoylated derivatives. The chain is Lipoyl synthase from Rickettsia bellii (strain RML369-C).